Consider the following 471-residue polypeptide: Ribulose bisphosphate carboxylase large chain (471 aa).

2 residues coordinate substrate: Asn115 and Thr165. The active-site Proton acceptor is the Lys167. Lys169 contacts substrate. Residues Lys193, Asp195, and Glu196 each coordinate Mg(2+). Lys193 is subject to N6-carboxylysine. The Proton acceptor role is filled by His286. Arg287, His319, and Ser371 together coordinate substrate.

It belongs to the RuBisCO large chain family. Type I subfamily. As to quaternary structure, heterohexadecamer of 8 large chains and 8 small chains. The cofactor is Mg(2+).

It localises to the carboxysome. It carries out the reaction 2 (2R)-3-phosphoglycerate + 2 H(+) = D-ribulose 1,5-bisphosphate + CO2 + H2O. The catalysed reaction is D-ribulose 1,5-bisphosphate + O2 = 2-phosphoglycolate + (2R)-3-phosphoglycerate + 2 H(+). RuBisCO catalyzes two reactions: the carboxylation of D-ribulose 1,5-bisphosphate, the primary event in carbon dioxide fixation, as well as the oxidative fragmentation of the pentose substrate in the photorespiration process. Both reactions occur simultaneously and in competition at the same active site. The protein is Ribulose bisphosphate carboxylase large chain of Synechococcus sp. (strain WH7803).